The chain runs to 461 residues: Steroidogenic factor 1 (461 aa).

The nuclear receptor DNA-binding region spans 10–85 (DELCPVCGDK…VGMRLEAVRA (76 aa)). An NR C4-type zinc finger spans residues 13 to 33 (CPVCGDKVSGYHYGLLTCESC). N6-acetyllysine is present on residues Lys-34, Lys-38, and Lys-72. The NR C4-type zinc-finger motif lies at 49–73 (CTESQSCKIDKTQRKRCPFCRFQKC). The disordered stretch occupies residues 116 to 158 (NGFKLETGPPVGVPPPPPPPPDYMLPHGLHASEPKGLASGPPA). A Glycyl lysine isopeptide (Lys-Gly) (interchain with G-Cter in SUMO) cross-link involves residue Lys-119. Pro residues predominate over residues 126–138 (VGVPPPPPPPPDY). A Glycyl lysine isopeptide (Lys-Gly) (interchain with G-Cter in SUMO) cross-link involves residue Lys-194. The residue at position 203 (Ser-203) is a Phosphoserine; by CDK7. The 238-residue stretch at 222–459 (GVPELILQLL…NLLIEMLQAK (238 aa)) folds into the NR LBD domain. The important for dimerization stretch occupies residues 230-461 (LLQLEPDEDQ…LIEMLQAKQT (232 aa)). Residues Gly-341, Tyr-436, and Lys-440 each contribute to the a 1,2-diacyl-sn-glycero-3-phosphocholine site.

The protein belongs to the nuclear hormone receptor family. NR5 subfamily. As to quaternary structure, binds DNA as a monomer. Part of a complex consisting of SFPQ, NONO and NR5A1. Interacts with NR0B2. Interacts with DGKQ and CDK7. Binds to and activated by HIPK3. Post-translationally, may be regulated by phosphorylation and dephosphorylation. In terms of processing, acetylation stimulates the transcriptional activity. Sumoylation reduces CDK7-mediated phosphorylation on Ser-203. Post-translationally, phosphorylated on Ser-203 by CDK7. This phosphorylation promotes transcriptional activity. Adrenal, ovary, testis, placenta, adipocyte, and brain.

Its subcellular location is the nucleus. In terms of biological role, transcriptional activator. Seems to be essential for sexual differentiation and formation of the primary steroidogenic tissues. Binds to the Ad4 site found in the promoter region of steroidogenic P450 genes such as CYP11A, CYP11B and CYP21B. Also regulates the AMH/Muellerian inhibiting substance gene as well as the AHCH and STAR genes. 5'-YCAAGGYC-3' and 5'-RRAGGTCA-3' are the consensus sequences for the recognition by NR5A1. The SFPQ-NONO-NR5A1 complex binds to the CYP17 promoter and regulates basal and cAMP-dependent transcriptional activity. Binds phospholipids with a phosphatidylinositol (PI) headgroup, in particular PI(3,4)P2 and PI(3,4,5)P3. Activated by the phosphorylation of NR5A1 by HIPK3 leading to increased steroidogenic gene expression upon cAMP signaling pathway stimulation. This chain is Steroidogenic factor 1 (NR5A1), found in Bos taurus (Bovine).